The sequence spans 152 residues: Large ribosomal subunit protein bL9 (152 aa).

It belongs to the bacterial ribosomal protein bL9 family.

Functionally, binds to the 23S rRNA. This Mycobacterium marinum (strain ATCC BAA-535 / M) protein is Large ribosomal subunit protein bL9.